We begin with the raw amino-acid sequence, 235 residues long: Lipoprotein-releasing system ATP-binding protein LolD (235 aa).

Residues 13–235 (LCCSNIIKRY…SNGMLKISTI (223 aa)) form the ABC transporter domain. 49 to 56 (GASGSGKS) provides a ligand contact to ATP.

It belongs to the ABC transporter superfamily. Lipoprotein translocase (TC 3.A.1.125) family. The complex is composed of two ATP-binding proteins (LolD) and two transmembrane proteins (LolC and LolE).

The protein localises to the cell inner membrane. In terms of biological role, part of the ABC transporter complex LolCDE involved in the translocation of mature outer membrane-directed lipoproteins, from the inner membrane to the periplasmic chaperone, LolA. Responsible for the formation of the LolA-lipoprotein complex in an ATP-dependent manner. This is Lipoprotein-releasing system ATP-binding protein LolD from Blochmanniella floridana.